A 579-amino-acid polypeptide reads, in one-letter code: UPF0324 membrane protein DVU_2133 (579 aa).

Helical transmembrane passes span 26-45 (YWAI…LFLA), 193-215 (PFNI…AVGM), 225-243 (FLVG…LMMG), 250-272 (YWGI…TVGT), 305-327 (IGIP…TFIF), 369-391 (LTLA…PAFI), 401-423 (GGAW…AFLG), 436-456 (IQNV…CARV), 476-495 (FVLG…GSLG), 515-534 (LRNW…TNFR), and 549-571 (YVAG…FYIV).

The protein belongs to the UPF0324 family.

It is found in the cell membrane. The chain is UPF0324 membrane protein DVU_2133 from Nitratidesulfovibrio vulgaris (strain ATCC 29579 / DSM 644 / CCUG 34227 / NCIMB 8303 / VKM B-1760 / Hildenborough) (Desulfovibrio vulgaris).